A 153-amino-acid polypeptide reads, in one-letter code: MSGWDQYVQYLTANQQVEYGLILGKTDGTIWASNVGLTTLYNNYQIDVEGQKANVNETANLLAAMNNNGVPTDPLCGIRIMNQKYYTVKYDADSQVWYLKKDHGGACIAITNQALVIGTFDITKKQQNGVAQNPGQVNKVVESLAATLKQAGY.

The protein belongs to the profilin family. As to quaternary structure, occurs in many kinds of cells as a complex with monomeric actin in a 1:1 ratio.

It localises to the cytoplasm. Its subcellular location is the cytoskeleton. Its function is as follows. Binds to actin and affects the structure of the cytoskeleton. At high concentrations, profilin prevents the polymerization of actin, whereas it enhances it at low concentrations. By binding to PIP2, it inhibits the formation of IP3 and DG. The polypeptide is Profilin (Tetrahymena pyriformis).